Reading from the N-terminus, the 2820-residue chain is Neurofibromin (2820 aa).

Ala2 bears the N-acetylalanine mark. Phosphoserine is present on residues Ser866 and Ser878. The Ras-GAP domain occupies 1253 to 1463 (HLLYQLLWNM…DLARRFFLDI (211 aa)). The 159-residue stretch at 1561–1719 (EKEEFKALKT…ATLALEEDLK (159 aa)) folds into the CRAL-TRIO domain. The interval 1561–1818 (EKEEFKALKT…RTRWELSQPD (258 aa)) is lipid binding. Residues Ser2169 and Ser2448 each carry the phosphoserine modification. The segment at 2457 to 2482 (YPIHHGDPSSRTLKETQPWSSPRGSE) is disordered. The span at 2458–2470 (PIHHGDPSSRTLK) shows a compositional bias: basic and acidic residues. Phosphothreonine is present on Thr2495. Ser2496, Ser2502, Ser2504, and Ser2524 each carry phosphoserine. The Bipartite nuclear localization signal signature appears at 2536 to 2552 (KRQEMESGITTPPKMRR). Phosphothreonine is present on Thr2546. Phosphoserine occurs at positions 2578, 2783, and 2798. The tract at residues 2768–2820 (TSQHSPGIDKENVELSPTTGHCNSGRTRHGSASQVQKQRSAGSFKRNSIKKIV) is disordered. Polar residues predominate over residues 2782-2808 (LSPTTGHCNSGRTRHGSASQVQKQRSA).

As to quaternary structure, interacts with HTR6. Interacts with SPRED2. Ubiquitinated by RNF7/RBX2, leading to its degradation.

It localises to the nucleus. It is found in the nucleolus. The protein resides in the cell membrane. Functionally, stimulates the GTPase activity of Ras. NF1 shows greater affinity for Ras GAP, but lower specific activity. May be a regulator of Ras activity. The polypeptide is Neurofibromin (Nf1) (Rattus norvegicus (Rat)).